The primary structure comprises 214 residues: Non-structural protein NP-1 (214 aa).

Disordered regions lie at residues 1–87 and 192–214; these read MSSE…TNPY and ESEE…NASN. Basic residues predominate over residues 33-43; the sequence is SRSRSPIRRHG. The segment covering 44–55 has biased composition (basic and acidic residues); the sequence is EKNLEYAHHSNQ. A compositionally biased stretch (polar residues) spans 56–71; that stretch reads ENRQSSYTALKTSDQA. The span at 192 to 201 shows a compositional bias: acidic residues; the sequence is ESEEVTDEEM.

It belongs to the Bocaparvovirus Non-structural protein NP-1 family.

The protein localises to the host nucleus. In terms of biological role, required for the expression of the capsid proteins. Performs the splicing and internal polyadenylation of the viral capsid-encoding mRNA precursor, which allows its maturation and expression. Transactivates the viral promoter. The sequence is that of Non-structural protein NP-1 (NP1) from Human bocavirus 2 (HBoV2).